We begin with the raw amino-acid sequence, 296 residues long: MSSNPFRIQNPQPQPQRQPRDLRKVNQQVQAVDLKVQMKMKNIKYKIGVVSGKGGVGKSFVSSNLAMAIAASGRKVGIVDVDFHGPSVPKMLGVRGQMLTADDKGINPVIGPFGIKVVSIDFLLPRDDTPVVWRGAIKHSAIKQFLGDVNWGELDYLIIDMPPGTGDEALSIAQLVPGITGFVIVTIPSEVSTLAVKKSINFARTVNTKILGVVENMSHFVCPSDGKVYYIFGEGKGKKMAEEMGVDLLGQVPLDPSIAEANDAGEPFFLKHPDSPTSKEFLNIADKVIKIVESNQ.

Over residues 1–17 (MSSNPFRIQNPQPQPQR) the composition is skewed to low complexity. A disordered region spans residues 1-23 (MSSNPFRIQNPQPQPQRQPRDLR). 52 to 59 (GKGGVGKS) contacts ATP.

The protein belongs to the Mrp/NBP35 ATP-binding proteins family. As to quaternary structure, homodimer.

Its function is as follows. Binds and transfers iron-sulfur (Fe-S) clusters to target apoproteins. Can hydrolyze ATP. The polypeptide is Iron-sulfur cluster carrier protein (Saccharolobus solfataricus (strain ATCC 35092 / DSM 1617 / JCM 11322 / P2) (Sulfolobus solfataricus)).